A 343-amino-acid polypeptide reads, in one-letter code: Cathepsin Q (343 aa).

Positions 1–20 (MTPAVFLVILCLGVVPGASA) are cleaved as a signal peptide. Residues 21 to 124 (LDLSLDVQWQ…FPNSWNWRDA (104 aa)) constitute a propeptide, activation peptide. 2 disulfide bridges follow: Cys-146/Cys-189 and Cys-180/Cys-222. Cys-149 is an active-site residue. The N-linked (GlcNAc...) asparagine glycan is linked to Asn-228. Cys-280 and Cys-332 are joined by a disulfide. The active site involves His-286. Residue Asn-298 is glycosylated (N-linked (GlcNAc...) asparagine). Residue Asn-310 is part of the active site.

Belongs to the peptidase C1 family. In terms of tissue distribution, highly expressed in placenta.

Its subcellular location is the lysosome. The polypeptide is Cathepsin Q (Ctsq) (Rattus norvegicus (Rat)).